A 483-amino-acid polypeptide reads, in one-letter code: Putative (R)-citramalate synthase CimA (483 aa).

The region spanning 1-245 (MRDGEQTPGV…DTGIKHEQIY (245 aa)) is the Pyruvate carboxyltransferase domain.

The protein belongs to the alpha-IPM synthase/homocitrate synthase family. In terms of assembly, homodimer.

It catalyses the reaction pyruvate + acetyl-CoA + H2O = (3R)-citramalate + CoA + H(+). Its pathway is amino-acid biosynthesis; L-isoleucine biosynthesis; 2-oxobutanoate from pyruvate: step 1/3. Its function is as follows. Catalyzes the condensation of pyruvate and acetyl-coenzyme A to form (R)-citramalate. The protein is Putative (R)-citramalate synthase CimA of Methanosarcina acetivorans (strain ATCC 35395 / DSM 2834 / JCM 12185 / C2A).